We begin with the raw amino-acid sequence, 544 residues long: Phenylalanine--tRNA ligase beta subunit (544 aa).

Residues 268–343 (LIHKIQNVRE…MSIGYNNLEP (76 aa)) enclose the B5 domain. Residues Asp321, Asp327, Glu330, and Asp331 each contribute to the Mg(2+) site.

This sequence belongs to the phenylalanyl-tRNA synthetase beta subunit family. Type 2 subfamily. In terms of assembly, tetramer of two alpha and two beta subunits. Mg(2+) is required as a cofactor.

It is found in the cytoplasm. The catalysed reaction is tRNA(Phe) + L-phenylalanine + ATP = L-phenylalanyl-tRNA(Phe) + AMP + diphosphate + H(+). This Saccharolobus solfataricus (strain ATCC 35092 / DSM 1617 / JCM 11322 / P2) (Sulfolobus solfataricus) protein is Phenylalanine--tRNA ligase beta subunit.